The sequence spans 257 residues: Indole-3-glycerol phosphate synthase (257 aa).

Belongs to the TrpC family.

The catalysed reaction is 1-(2-carboxyphenylamino)-1-deoxy-D-ribulose 5-phosphate + H(+) = (1S,2R)-1-C-(indol-3-yl)glycerol 3-phosphate + CO2 + H2O. It functions in the pathway amino-acid biosynthesis; L-tryptophan biosynthesis; L-tryptophan from chorismate: step 4/5. This chain is Indole-3-glycerol phosphate synthase, found in Halalkalibacterium halodurans (strain ATCC BAA-125 / DSM 18197 / FERM 7344 / JCM 9153 / C-125) (Bacillus halodurans).